Here is a 338-residue protein sequence, read N- to C-terminus: D-erythrose-4-phosphate dehydrogenase (338 aa).

11 to 12 provides a ligand contact to NAD(+); it reads RI. Substrate-binding positions include 153–155, Arg199, 212–213, and Arg235; these read SCT and TK. Cys154 functions as the Nucleophile in the catalytic mechanism. Asn317 lines the NAD(+) pocket.

The protein belongs to the glyceraldehyde-3-phosphate dehydrogenase family. Epd subfamily. Homotetramer.

It is found in the cytoplasm. The enzyme catalyses D-erythrose 4-phosphate + NAD(+) + H2O = 4-phospho-D-erythronate + NADH + 2 H(+). It functions in the pathway cofactor biosynthesis; pyridoxine 5'-phosphate biosynthesis; pyridoxine 5'-phosphate from D-erythrose 4-phosphate: step 1/5. In terms of biological role, catalyzes the NAD-dependent conversion of D-erythrose 4-phosphate to 4-phosphoerythronate. The sequence is that of D-erythrose-4-phosphate dehydrogenase from Shewanella baltica (strain OS223).